The sequence spans 74 residues: Kappa-scoloptoxin(07)-Ssm2d (74 aa).

The N-terminal stretch at 1–19 (MLVFYALLFVTVFSNTVMG) is a signal peptide. Positions 20 to 41 (ATIDKPIPKPILREAIEEIEVN) are excised as a propeptide.

It belongs to the scoloptoxin-07 family. Contains 3 disulfide bonds. As to expression, expressed by the venom gland.

It is found in the secreted. Functionally, inhibits voltage-gated potassium channels. This chain is Kappa-scoloptoxin(07)-Ssm2d, found in Scolopendra mutilans (Chinese red-headed centipede).